A 233-amino-acid chain; its full sequence is Protein TIPIN homolog (233 aa).

The segment covering 1 to 14 (MDEMEDFFENDELD) has biased composition (acidic residues). Disordered regions lie at residues 1 to 39 (MDEM…RVVE) and 134 to 233 (GETG…NNDW). 2 stretches are compositionally biased toward basic and acidic residues: residues 163–190 (DLFK…KTAE) and 197–216 (EEYR…AKEA). Over residues 217-227 (ADEDALMEDFG) the composition is skewed to acidic residues.

Belongs to the CSM3 family.

It localises to the cytoplasm. The protein localises to the nucleus. Its function is as follows. Required for normal progression of S-phase. Important for cell survival after DNA damage or replication stress. This Caenorhabditis elegans protein is Protein TIPIN homolog.